A 249-amino-acid polypeptide reads, in one-letter code: Probable proteasome subunit alpha type-2 (249 aa).

The protein belongs to the peptidase T1A family. As to quaternary structure, the 26S proteasome consists of a 20S proteasome core and two 19S regulatory subunits. The 20S proteasome core is composed of 28 subunits that are arranged in four stacked rings, resulting in a barrel-shaped structure. The two end rings are each formed by seven alpha subunits, and the two central rings are each formed by seven beta subunits. The catalytic chamber with the active sites is on the inside of the barrel.

The protein resides in the cytoplasm. Its subcellular location is the nucleus. Its function is as follows. The proteasome is a multicatalytic proteinase complex which is characterized by its ability to cleave peptides with Arg, Phe, Tyr, Leu, and Glu adjacent to the leaving group at neutral or slightly basic pH. The proteasome has an ATP-dependent proteolytic activity. This Neurospora crassa (strain ATCC 24698 / 74-OR23-1A / CBS 708.71 / DSM 1257 / FGSC 987) protein is Probable proteasome subunit alpha type-2 (pca-2).